The chain runs to 310 residues: Glutarate 2-hydroxylase (310 aa).

Residues histidine 160, aspartate 162, and histidine 277 each contribute to the Fe cation site.

Belongs to the glutarate hydroxylase family. In terms of assembly, homotetramer. It depends on Fe(2+) as a cofactor.

The catalysed reaction is glutarate + 2-oxoglutarate + O2 = (S)-2-hydroxyglutarate + succinate + CO2. It participates in amino-acid degradation. Functionally, acts as an alpha-ketoglutarate-dependent dioxygenase catalyzing hydroxylation of glutarate (GA) to L-2-hydroxyglutarate (L2HG). Functions in a L-lysine degradation pathway that proceeds via cadaverine, glutarate and L-2-hydroxyglutarate. The chain is Glutarate 2-hydroxylase from Shigella flexneri.